We begin with the raw amino-acid sequence, 550 residues long: MLAQLFEQLFQSIDSTLITNIFIWAVIFVFLSAWWCDKKNIHSKFREYAPTLMGALGILGTFIGIIIGLLNFNTESIDTSIPVLLGGLKTAFITSIVGMFFAILFNGMDAFFFANKRSALAENNPESVTPEHIYHELKEQNQTLTKLVSGINGDSEGSLIAQIKLLRTEISDSSQAQLANHTHFSNKLWEQLEQFADLMAKGATEQIIDALRQVIIDFNENLTEQFGENFKALDASVKKLVEWQGNYKTQIEQMSEQYQQSVESLVETKTAVAGIWEECKEIPLAMSELREVLQVNQHQISELSRHLETFVAIRDKATTVLPEIQNKMAEVGELLKSGAANVSASLEQTSQQILLNADSMRVALDEGTEGFRQSVTQTQQAFASMAHDVSNSSETLTSTLGETITEMKQSGEEFLKSLESHSKELHRNMEQNTTNVIDMFSKTGEKINHQLSSNADNMFDSIQTSFDKAGAGLTSQVRESIEKFALSINEQLHAFEQATEREMNREMQSLGNALLSISKGFVGNYEKLIKDYQIVMGQLQALISANKHRG.

Transmembrane regions (helical) follow at residues 16–36 (TLIT…AWWC), 52–72 (LMGA…LLNF), and 92–112 (FITS…DAFF).

Belongs to the MotA family.

The protein localises to the cell inner membrane. Functionally, component of antiviral defense system Zorya type II, composed of ZorA, ZorB and ZorE. Expression of Zorya type II in E.coli (strain MG1655) confers resistance to phages SECphi7 and T7. While most T7 infected Zorya-containing cells undergo abortive infection, a minority produce viable phage progeny. These eventually accumulate to a high multiplicity of infection, leading to culture collapse by 170 minutes after initial infection. ZorA and ZorB probably assemble in the cell inner membrane and exert their effect there. This Escherichia coli (strain ATCC 8739 / DSM 1576 / NBRC 3972 / NCIMB 8545 / WDCM 00012 / Crooks) protein is Zorya protein ZorA.